A 127-amino-acid polypeptide reads, in one-letter code: DNA-directed RNA polymerase subunit omega (127 aa).

This sequence belongs to the RNA polymerase subunit omega family. The RNAP catalytic core consists of 2 alpha, 1 beta, 1 beta' and 1 omega subunit. When a sigma factor is associated with the core the holoenzyme is formed, which can initiate transcription.

The enzyme catalyses RNA(n) + a ribonucleoside 5'-triphosphate = RNA(n+1) + diphosphate. Promotes RNA polymerase assembly. Latches the N- and C-terminal regions of the beta' subunit thereby facilitating its interaction with the beta and alpha subunits. The chain is DNA-directed RNA polymerase subunit omega from Rickettsia africae (strain ESF-5).